Here is a 381-residue protein sequence, read N- to C-terminus: Transaldolase 1 (381 aa).

The active-site Schiff-base intermediate with substrate is lysine 149.

Belongs to the transaldolase family. Type 2 subfamily.

It is found in the cytoplasm. It catalyses the reaction D-sedoheptulose 7-phosphate + D-glyceraldehyde 3-phosphate = D-erythrose 4-phosphate + beta-D-fructose 6-phosphate. It functions in the pathway carbohydrate degradation; pentose phosphate pathway; D-glyceraldehyde 3-phosphate and beta-D-fructose 6-phosphate from D-ribose 5-phosphate and D-xylulose 5-phosphate (non-oxidative stage): step 2/3. Its function is as follows. Transaldolase is important for the balance of metabolites in the pentose-phosphate pathway. The protein is Transaldolase 1 (tal1) of Streptomyces coelicolor (strain ATCC BAA-471 / A3(2) / M145).